The primary structure comprises 701 residues: ER-retained PMA1-suppressing protein 1 (701 aa).

Residues 1-27 (MKMNLKRLVVTFFSCITFLLKFTIAAA) form the signal peptide. The 115-residue stretch at 28-142 (EPPEGFPEPL…LIAFARRESM (115 aa)) folds into the Thioredoxin 1 domain. Cysteine 60 and cysteine 63 are disulfide-bonded. Asparagine 85 carries an N-linked (GlcNAc...) asparagine glycan. A disulfide bridge connects residues cysteine 200 and cysteine 203. Residues asparagine 264, asparagine 299, and asparagine 370 are each glycosylated (N-linked (GlcNAc...) asparagine). One can recognise a Thioredoxin 2 domain in the interval 408 to 446 (PTFFMFKDGDPISYVFPGYSTTEMRNIDAIMDWVKKYSN). The helical transmembrane segment at 646–666 (IIHGNGMPGYLIVIVLFIAIL) threads the bilayer.

Belongs to the protein disulfide isomerase family. Interacts with mutated PMA1-D378N but not wild type PMA1. Interacts with EUG1, KAR2, MPD1 and PDI1.

The protein resides in the endoplasmic reticulum membrane. The enzyme catalyses Catalyzes the rearrangement of -S-S- bonds in proteins.. Functionally, acts as a membrane-bound chaperone in endoplasmic reticulum quality control. Probably facilitates presentation of substrate to membrane-bound components of the degradation machinery. This is ER-retained PMA1-suppressing protein 1 (EPS1) from Saccharomyces cerevisiae (strain ATCC 204508 / S288c) (Baker's yeast).